A 163-amino-acid polypeptide reads, in one-letter code: Nucleotide-binding protein HDEF_1968 (163 aa).

The protein belongs to the YajQ family.

Nucleotide-binding protein. The polypeptide is Nucleotide-binding protein HDEF_1968 (Hamiltonella defensa subsp. Acyrthosiphon pisum (strain 5AT)).